We begin with the raw amino-acid sequence, 176 residues long: Large ribosomal subunit protein eL6A (176 aa).

Serine 2 carries the N-acetylserine modification. Serine 12 is subject to Phosphoserine. Lysine 128 is covalently cross-linked (Glycyl lysine isopeptide (Lys-Gly) (interchain with G-Cter in ubiquitin)).

The protein belongs to the eukaryotic ribosomal protein eL6 family. As to quaternary structure, component of the large ribosomal subunit (LSU). Mature yeast ribosomes consist of a small (40S) and a large (60S) subunit. The 40S small subunit contains 1 molecule of ribosomal RNA (18S rRNA) and 33 different proteins (encoded by 57 genes). The large 60S subunit contains 3 rRNA molecules (25S, 5.8S and 5S rRNA) and 46 different proteins (encoded by 81 genes). In terms of processing, N-terminally acetylated by acetyltransferase NatA.

It is found in the cytoplasm. Functionally, component of the ribosome, a large ribonucleoprotein complex responsible for the synthesis of proteins in the cell. The small ribosomal subunit (SSU) binds messenger RNAs (mRNAs) and translates the encoded message by selecting cognate aminoacyl-transfer RNA (tRNA) molecules. The large subunit (LSU) contains the ribosomal catalytic site termed the peptidyl transferase center (PTC), which catalyzes the formation of peptide bonds, thereby polymerizing the amino acids delivered by tRNAs into a polypeptide chain. The nascent polypeptides leave the ribosome through a tunnel in the LSU and interact with protein factors that function in enzymatic processing, targeting, and the membrane insertion of nascent chains at the exit of the ribosomal tunnel. The polypeptide is Large ribosomal subunit protein eL6A (Saccharomyces cerevisiae (strain ATCC 204508 / S288c) (Baker's yeast)).